We begin with the raw amino-acid sequence, 259 residues long: UPF0246 protein SG0407 (259 aa).

It belongs to the UPF0246 family.

This chain is UPF0246 protein SG0407, found in Sodalis glossinidius (strain morsitans).